The following is a 731-amino-acid chain: Zinc finger protein 615 (731 aa).

The KRAB domain maps to 8 to 79 (LTLEDVAVDF…EDEIYSRICS (72 aa)). 19 consecutive C2H2-type zinc fingers follow at residues 204–226 (HVCS…QRVH), 232–254 (HVCS…QRTH), 260–282 (YECT…QKTH), 288–310 (YTCS…QRTH), 316–338 (HGCS…QKTH), 344–366 (YICS…HRTH), 372–394 (FICN…QQTH), 400–422 (YTCS…QRTH), 428–450 (YKCN…QRTH), 456–478 (YVCT…QRTH), 484–506 (YICN…QRTH), 512–534 (YVCG…QRTH), 540–562 (YICN…RRTH), 568–590 (YVCS…QRTH), 596–618 (YICN…QQTH), 624–646 (YKCN…QRFH), 652–674 (FACT…QRIH), 680–702 (YKCS…QRKH), and 708–730 (YGCS…RRIH).

This sequence belongs to the krueppel C2H2-type zinc-finger protein family.

The protein resides in the nucleus. In terms of biological role, may be involved in transcriptional regulation. The protein is Zinc finger protein 615 (ZNF615) of Homo sapiens (Human).